Consider the following 308-residue polypeptide: Methionyl-tRNA formyltransferase (308 aa).

110 to 113 (SLLP) is a (6S)-5,6,7,8-tetrahydrofolate binding site.

The protein belongs to the Fmt family.

It catalyses the reaction L-methionyl-tRNA(fMet) + (6R)-10-formyltetrahydrofolate = N-formyl-L-methionyl-tRNA(fMet) + (6S)-5,6,7,8-tetrahydrofolate + H(+). Attaches a formyl group to the free amino group of methionyl-tRNA(fMet). The formyl group appears to play a dual role in the initiator identity of N-formylmethionyl-tRNA by promoting its recognition by IF2 and preventing the misappropriation of this tRNA by the elongation apparatus. The polypeptide is Methionyl-tRNA formyltransferase (Mycobacterium sp. (strain KMS)).